The sequence spans 177 residues: Large ribosomal subunit protein uL6 (177 aa).

The protein belongs to the universal ribosomal protein uL6 family. As to quaternary structure, part of the 50S ribosomal subunit.

Functionally, this protein binds to the 23S rRNA, and is important in its secondary structure. It is located near the subunit interface in the base of the L7/L12 stalk, and near the tRNA binding site of the peptidyltransferase center. In Citrobacter koseri (strain ATCC BAA-895 / CDC 4225-83 / SGSC4696), this protein is Large ribosomal subunit protein uL6.